The following is a 449-amino-acid chain: MEFFISMSETIKYNDDDHKTLFLKTLNEQRLEGEFCDIAIVVEDVKFRAHRCVLAACSTYFKKLFKKLEVDSSSVIEIDFLRSDIFEEVLNYMYTAKISVKKEDVNLMMSSGQILGIRFLDKLCSQKRDVSSPDESNGQSKSKYCLKLNRPIGDAADAQDDDVEEIGDQDDSPSDDTVEGTPPSQEDGKSPTTTLRVQEAILKELGSEEVRKVNCYGQEVESMETPESKDLGSQTPQALTFNDGMSEVKDEQTPGWTTAASDMKFEYLLYGHHREQIACQACGKTFSDEGRLRKHEKLHTADRPFVCEMCTKGFTTQAHLKEHLKIHTGYKPYSCEVCGKSFIRAPDLKKHERVHSNERPFACHMCDKAFKHKSHLKDHERRHRGEKPFVCGSCTKAFAKASDLKRHENNMHSERKQVTPSAIQSETEQLQAAAMAAEAEQQLETIACS.

The BTB domain maps to 36 to 102 (CDIAIVVEDV…MYTAKISVKK (67 aa)). Lys-46 participates in a covalent cross-link: Glycyl lysine isopeptide (Lys-Gly) (interchain with G-Cter in SUMO2). The Nuclear localization signal motif lies at 50-66 (HRCVLAACSTYFKKLFK). The segment at 156 to 194 (ADAQDDDVEEIGDQDDSPSDDTVEGTPPSQEDGKSPTTT) is disordered. Over residues 157–178 (DAQDDDVEEIGDQDDSPSDDTV) the composition is skewed to acidic residues. Residues Lys-203 and Lys-249 each participate in a glycyl lysine isopeptide (Lys-Gly) (interchain with G-Cter in SUMO2) cross-link. C2H2-type zinc fingers lie at residues 277-304 (IACQ…ADRP), 305-332 (FVCE…GYKP), 333-360 (YSCE…NERP), 361-388 (FACH…GEKP), and 389-417 (FVCG…ERKQ). A compositionally biased stretch (basic and acidic residues) spans 405–417 (KRHENNMHSERKQ). Residues 405–424 (KRHENNMHSERKQVTPSAIQ) are disordered.

This sequence belongs to the krueppel C2H2-type zinc-finger protein family. As to quaternary structure, interacts with ZBTB21. As to expression, ubiquitous.

The protein resides in the nucleus. In terms of biological role, transcriptional activator of the dopamine transporter (DAT), binding it's promoter at the consensus sequence 5'-CCTGCACAGTTCACGGA-3'. Binds to 5'-d(GCC)(n)-3' trinucleotide repeats in promoter regions and acts as a repressor of the FMR1 gene. Transcriptional repressor of MYC and thymidine kinase promoters. The sequence is that of Zinc finger and BTB domain-containing protein 14 (Zbtb14) from Mus musculus (Mouse).